Consider the following 466-residue polypeptide: 3-isopropylmalate dehydratase large subunit (466 aa).

3 residues coordinate [4Fe-4S] cluster: cysteine 347, cysteine 408, and cysteine 411.

Belongs to the aconitase/IPM isomerase family. LeuC type 1 subfamily. In terms of assembly, heterodimer of LeuC and LeuD. The cofactor is [4Fe-4S] cluster.

It catalyses the reaction (2R,3S)-3-isopropylmalate = (2S)-2-isopropylmalate. The protein operates within amino-acid biosynthesis; L-leucine biosynthesis; L-leucine from 3-methyl-2-oxobutanoate: step 2/4. Functionally, catalyzes the isomerization between 2-isopropylmalate and 3-isopropylmalate, via the formation of 2-isopropylmaleate. The protein is 3-isopropylmalate dehydratase large subunit of Herminiimonas arsenicoxydans.